The primary structure comprises 394 residues: Elongation factor Tu (394 aa).

A tr-type G domain is found at 10–204 (KEHANIGTIG…AVDDYIPTPE (195 aa)). Residues 19-26 (GHVDHGKT) form a G1 region. 19–26 (GHVDHGKT) lines the GTP pocket. Thr26 provides a ligand contact to Mg(2+). The interval 60 to 64 (GITIN) is G2. The interval 81 to 84 (DCPG) is G3. Residues 81–85 (DCPGH) and 136–139 (NKVD) each bind GTP. Residues 136–139 (NKVD) form a G4 region. Residues 174-176 (SAL) are G5.

Belongs to the TRAFAC class translation factor GTPase superfamily. Classic translation factor GTPase family. EF-Tu/EF-1A subfamily. As to quaternary structure, monomer.

It is found in the cytoplasm. The enzyme catalyses GTP + H2O = GDP + phosphate + H(+). GTP hydrolase that promotes the GTP-dependent binding of aminoacyl-tRNA to the A-site of ribosomes during protein biosynthesis. The protein is Elongation factor Tu of Staphylococcus epidermidis (strain ATCC 35984 / DSM 28319 / BCRC 17069 / CCUG 31568 / BM 3577 / RP62A).